The primary structure comprises 172 residues: Large ribosomal subunit protein uL10 (172 aa).

The protein belongs to the universal ribosomal protein uL10 family. In terms of assembly, part of the ribosomal stalk of the 50S ribosomal subunit. The N-terminus interacts with L11 and the large rRNA to form the base of the stalk. The C-terminus forms an elongated spine to which L12 dimers bind in a sequential fashion forming a multimeric L10(L12)X complex.

In terms of biological role, forms part of the ribosomal stalk, playing a central role in the interaction of the ribosome with GTP-bound translation factors. The sequence is that of Large ribosomal subunit protein uL10 from Parvibaculum lavamentivorans (strain DS-1 / DSM 13023 / NCIMB 13966).